The following is a 350-amino-acid chain: Uroporphyrinogen decarboxylase (350 aa).

Residues 28-32, aspartate 78, tyrosine 155, serine 210, and histidine 325 each bind substrate; that span reads RQAGR.

Belongs to the uroporphyrinogen decarboxylase family. As to quaternary structure, homodimer.

The protein localises to the cytoplasm. It carries out the reaction uroporphyrinogen III + 4 H(+) = coproporphyrinogen III + 4 CO2. The protein operates within porphyrin-containing compound metabolism; protoporphyrin-IX biosynthesis; coproporphyrinogen-III from 5-aminolevulinate: step 4/4. In terms of biological role, catalyzes the decarboxylation of four acetate groups of uroporphyrinogen-III to yield coproporphyrinogen-III. The polypeptide is Uroporphyrinogen decarboxylase (Microcystis aeruginosa (strain NIES-843 / IAM M-2473)).